Consider the following 236-residue polypeptide: 1-(5-phosphoribosyl)-5-[(5-phosphoribosylamino)methylideneamino] imidazole-4-carboxamide isomerase (236 aa).

The Proton acceptor role is filled by Asp8. Asp129 functions as the Proton donor in the catalytic mechanism.

This sequence belongs to the HisA/HisF family.

It localises to the cytoplasm. It carries out the reaction 1-(5-phospho-beta-D-ribosyl)-5-[(5-phospho-beta-D-ribosylamino)methylideneamino]imidazole-4-carboxamide = 5-[(5-phospho-1-deoxy-D-ribulos-1-ylimino)methylamino]-1-(5-phospho-beta-D-ribosyl)imidazole-4-carboxamide. Its pathway is amino-acid biosynthesis; L-histidine biosynthesis; L-histidine from 5-phospho-alpha-D-ribose 1-diphosphate: step 4/9. The sequence is that of 1-(5-phosphoribosyl)-5-[(5-phosphoribosylamino)methylideneamino] imidazole-4-carboxamide isomerase from Methanosphaerula palustris (strain ATCC BAA-1556 / DSM 19958 / E1-9c).